The following is a 249-amino-acid chain: Probable transcriptional regulator ycf27 (249 aa).

A Response regulatory domain is found at His-13 to Leu-126. Asp-62 is modified (4-aspartylphosphate). The segment at residues Asp-82–Gly-100 is a DNA-binding region (H-T-H motif). Residues Ile-142–Lys-246 constitute a DNA-binding region (ompR/PhoB-type).

Its subcellular location is the plastid. The protein resides in the chloroplast. Functionally, probable promoter-specific protein mediating the interaction between DNA and RNA polymerase. This chain is Probable transcriptional regulator ycf27 (ycf27), found in Cyanidium caldarium (Red alga).